A 436-amino-acid polypeptide reads, in one-letter code: Divalent metal cation transporter MntH (436 aa).

Residues 1-22 (MDSRSPSLPDDRPDPPEQHLDA) are compositionally biased toward basic and acidic residues. Residues 1–31 (MDSRSPSLPDDRPDPPEQHLDARAGATLRGT) form a disordered region. A run of 11 helical transmembrane segments spans residues 40–60 (ILPF…PGNF), 71–91 (GYSL…IQNL), 115–135 (LVWF…LAEF), 144–164 (LLTG…TFWL), 177–197 (LAVG…VVLA), 216–236 (GSAY…VIYL), 264–284 (VIAA…VAAA), 304–324 (LTPL…LASG), 354–374 (LITM…SSVL), 375–395 (ILSQ…LLLF), and 411–431 (FTVI…YLLW).

The protein belongs to the NRAMP family.

The protein resides in the cell membrane. Its function is as follows. H(+)-stimulated, divalent metal cation uptake system. The protein is Divalent metal cation transporter MntH of Deinococcus radiodurans (strain ATCC 13939 / DSM 20539 / JCM 16871 / CCUG 27074 / LMG 4051 / NBRC 15346 / NCIMB 9279 / VKM B-1422 / R1).